The chain runs to 1728 residues: Mitochondrial 3' processome subunit 1 (1728 aa).

A mitochondrion-targeting transit peptide spans Met1 to Phe117. Disordered stretches follow at residues His45 to Gly71, Glu88 to Gln156, and Gly829 to Thr863.

Component of the mitochondrial 3' processome (MPsome) complex composed at least of terminal uridylyltransferase KRET1/TUT1, 3'-5' exonuclease DSS1, MPSS1, MPSS2 and MPSS3. Within the complex, interacts with KRET1.

The protein localises to the mitochondrion. Its function is as follows. As part of the mitochondrial 3' processome (MPsome), involved in the maturation of guided RNA (gRNA) precursors. The sequence is that of Mitochondrial 3' processome subunit 1 from Trypanosoma brucei brucei.